Here is a 236-residue protein sequence, read N- to C-terminus: Hydroxyacylglutathione hydrolase (236 aa).

Residues His52, His54, Asp56, His57, His108, Asp125, and His163 each contribute to the Zn(2+) site.

This sequence belongs to the metallo-beta-lactamase superfamily. Glyoxalase II family. As to quaternary structure, monomer. It depends on Zn(2+) as a cofactor.

The enzyme catalyses an S-(2-hydroxyacyl)glutathione + H2O = a 2-hydroxy carboxylate + glutathione + H(+). The protein operates within secondary metabolite metabolism; methylglyoxal degradation; (R)-lactate from methylglyoxal: step 2/2. Its function is as follows. Thiolesterase that catalyzes the hydrolysis of S-D-lactoyl-glutathione to form glutathione and D-lactic acid. The protein is Hydroxyacylglutathione hydrolase of Mannheimia succiniciproducens (strain KCTC 0769BP / MBEL55E).